Here is a 90-residue protein sequence, read N- to C-terminus: MENVVITVVGVDKPGIVAEVTKVLAQNSANIVDIRQTIMEDLFTMIMLVDISKISSDFSELNVALEKLGSEIGVKINVQHENIFKYMHRI.

In terms of domain architecture, ACT spans 5–79 (VITVVGVDKP…SEIGVKINVQ (75 aa)).

The protein belongs to the UPF0237 family.

The polypeptide is UPF0237 protein MMP0657 (Methanococcus maripaludis (strain DSM 14266 / JCM 13030 / NBRC 101832 / S2 / LL)).